The chain runs to 413 residues: Cardiolipin synthase B (413 aa).

PLD phosphodiesterase domains lie at 108–135 and 285–312; these read VFRR…SAEH and RRRP…DPLS. Catalysis depends on residues H113, K115, D120, H290, K292, and D297. The tract at residues 390–413 is disordered; the sequence is VGPPAQPTMETQDRVETENTGVKP.

It belongs to the phospholipase D family. Cardiolipin synthase subfamily. ClsB sub-subfamily.

It localises to the cell membrane. The catalysed reaction is 2 a 1,2-diacyl-sn-glycero-3-phospho-(1'-sn-glycerol) = a cardiolipin + glycerol. Functionally, catalyzes the phosphatidyl group transfer from one phosphatidylglycerol molecule to another to form cardiolipin (CL) (diphosphatidylglycerol) and glycerol. The chain is Cardiolipin synthase B from Escherichia coli O6:H1 (strain CFT073 / ATCC 700928 / UPEC).